The following is a 156-amino-acid chain: Ribonuclease pancreatic (156 aa).

Positions 1–28 (MALEKSLVRLLLLVLILLVLGWVQPSLG) are cleaved as a signal peptide. Over residues 33-43 (AKKFQRQHMDS) the composition is skewed to basic and acidic residues. The interval 33-53 (AKKFQRQHMDSDSSPSSSSTY) is disordered. Lysine 35 and arginine 38 together coordinate substrate. Histidine 40 functions as the Proton acceptor in the catalytic mechanism. Intrachain disulfides connect cysteine 54–cysteine 112, cysteine 68–cysteine 123, cysteine 86–cysteine 138, and cysteine 93–cysteine 100. N-linked (GlcNAc...) asparagine; partial glycosylation occurs at asparagine 62. Residues 69 to 73 (KPVNT) and lysine 94 contribute to the substrate site. The N-linked (GlcNAc...) asparagine glycan is linked to asparagine 104. Arginine 113 is a substrate binding site. N-linked (GlcNAc...) asparagine glycosylation is present at asparagine 116. The active-site Proton donor is histidine 147.

It belongs to the pancreatic ribonuclease family. Monomer. Interacts with and forms tight 1:1 complexes with RNH1. Dimerization of two such complexes may occur. Interaction with RNH1 inhibits this protein. N-linked glycans are of complex type. Pancreas and other tissues and body fluids (indicating it may have other physiological functions besides its role in digestion).

It localises to the secreted. The enzyme catalyses an [RNA] containing cytidine + H2O = an [RNA]-3'-cytidine-3'-phosphate + a 5'-hydroxy-ribonucleotide-3'-[RNA].. It carries out the reaction an [RNA] containing uridine + H2O = an [RNA]-3'-uridine-3'-phosphate + a 5'-hydroxy-ribonucleotide-3'-[RNA].. Functionally, endonuclease that catalyzes the cleavage of RNA on the 3' side of pyrimidine nucleotides. Acts on single-stranded and double-stranded RNA. The sequence is that of Ribonuclease pancreatic (RNASE1) from Homo sapiens (Human).